The chain runs to 467 residues: Protein PHOSPHATE STARVATION RESPONSE 3 (467 aa).

Residues 227-266 are disordered; it reads MSLPVSSCSDQEDLQDARSPAKVQLSSSRSSSGTASCNKP. Positions 262-322 constitute an HTH myb-type domain; the sequence is SCNKPRLRWT…HLQKYRLAKY (61 aa). Residues 293-318 constitute a DNA-binding region (H-T-H motif); sequence PKGVLKLMKVEGLTIYHIKSHLQKYR. The segment covering 327–337 has biased composition (basic and acidic residues); the sequence is KEDKKQEEKKT. Disordered regions lie at residues 327–353 and 400–467; these read KEDK…KSAQ and RESI…VHDE. The segment covering 402–412 has biased composition (polar residues); the sequence is SISSMTSTTEG. 2 stretches are compositionally biased toward basic and acidic residues: residues 419 to 428 and 438 to 467; these read PMEKTEDKAE and RITD…VHDE.

It is found in the nucleus. Transcription factor involved in phosphate starvation signaling. Binds to P1BS, an imperfect palindromic sequence 5'-GNATATNC-3', to promote the expression of inorganic phosphate (Pi) starvation-responsive genes. Functionally redundant with PHR1 and PHR2 in regulating Pi starvation response and Pi homeostasis. This Oryza sativa subsp. indica (Rice) protein is Protein PHOSPHATE STARVATION RESPONSE 3.